Consider the following 78-residue polypeptide: Translation initiation factor IF-1, chloroplastic (78 aa).

In terms of domain architecture, S1-like spans Met-1 to Arg-72.

This sequence belongs to the IF-1 family. Component of the 30S ribosomal translation pre-initiation complex which assembles on the 30S ribosome in the order IF-2 and IF-3, IF-1 and N-formylmethionyl-tRNA(fMet); mRNA recruitment can occur at any time during PIC assembly.

Its subcellular location is the plastid. It localises to the chloroplast. One of the essential components for the initiation of protein synthesis. Stabilizes the binding of IF-2 and IF-3 on the 30S subunit to which N-formylmethionyl-tRNA(fMet) subsequently binds. Helps modulate mRNA selection, yielding the 30S pre-initiation complex (PIC). Upon addition of the 50S ribosomal subunit IF-1, IF-2 and IF-3 are released leaving the mature 70S translation initiation complex. The sequence is that of Translation initiation factor IF-1, chloroplastic from Chaetosphaeridium globosum (Charophycean green alga).